Reading from the N-terminus, the 149-residue chain is Large ribosomal subunit protein bL20m (149 aa).

The transit peptide at 1-9 directs the protein to the mitochondrion; the sequence is MVFLTTRLW.

The protein belongs to the bacterial ribosomal protein bL20 family. Component of the mitochondrial ribosome large subunit (39S) which comprises a 16S rRNA and about 50 distinct proteins. Interacts with OXA1L.

The protein resides in the mitochondrion. The protein is Large ribosomal subunit protein bL20m (Mrpl20) of Mus musculus (Mouse).